The sequence spans 340 residues: DNA-directed RNA polymerase subunit alpha (340 aa).

Residues 1–233 (MIQDEIPIPV…DLFIIFLNME (233 aa)) are alpha N-terminal domain (alpha-NTD). The tract at residues 264–340 (AKEVAFKQIF…QLPKDQFNIS (77 aa)) is alpha C-terminal domain (alpha-CTD).

It belongs to the RNA polymerase alpha chain family. In terms of assembly, in plastids the minimal PEP RNA polymerase catalytic core is composed of four subunits: alpha, beta, beta', and beta''. When a (nuclear-encoded) sigma factor is associated with the core the holoenzyme is formed, which can initiate transcription.

It localises to the plastid. It is found in the chloroplast. It carries out the reaction RNA(n) + a ribonucleoside 5'-triphosphate = RNA(n+1) + diphosphate. Functionally, DNA-dependent RNA polymerase catalyzes the transcription of DNA into RNA using the four ribonucleoside triphosphates as substrates. The sequence is that of DNA-directed RNA polymerase subunit alpha from Psilotum nudum (Whisk fern).